We begin with the raw amino-acid sequence, 479 residues long: Probable phosphatidate cytidylyltransferase (479 aa).

A compositionally biased stretch (basic and acidic residues) spans 1 to 28; the sequence is MRTDNIRNRKEQLKKQEKKDFDSSKDEE. Residues 1–71 form a disordered region; that stretch reads MRTDNIRNRK…NNNNNNNNIK (71 aa). The Cytoplasmic segment spans residues 1 to 108; the sequence is MRTDNIRNRK…LAIRSVMGAF (108 aa). Residues 53 to 69 show a composition bias toward low complexity; the sequence is NKNIINQKTNNNNNNNN. The helical transmembrane segment at 109-129 threads the bilayer; the sequence is MIGFFTIVLSTDHFIVALFVI. The Extracellular portion of the chain corresponds to 130–159; the sequence is ALQLLVFKEMIALRYIEAKEKKIPHFRTLN. The chain crosses the membrane as a helical span at residues 160–180; the sequence is WFFLFTSFFFFYAKPILITLA. Over 181-192 the chain is Cytoplasmic; the sequence is NYYPDIFQHFVR. The helical transmembrane segment at 193–213 threads the bilayer; the sequence is YHLWHSFSLYCIGFVLFILTL. Topologically, residues 214-240 are extracellular; that stretch reads RKGVYRYQFSQLTWTLMILMMVVVQSN. The chain crosses the membrane as a helical span at residues 241 to 261; the sequence is FLISNIYQGLIWFILPVSIIV. Residues 262-293 lie on the Cytoplasmic side of the membrane; the sequence is CNDIFAYFNGFFLGKKFINRPLMKISPNKTWE. A helical transmembrane segment spans residues 294 to 314; sequence GFIGATGWTLLFAYYFCGFLL. Over 315–375 the chain is Extracellular; the sequence is KYDWIVCPKG…FTYIPIQFHA (61 aa). A helical transmembrane segment spans residues 376-396; it reads LVLALFGSLIAPFGGFFASGI. Over 397–479 the chain is Cytoplasmic; it reads KRAYKVKDFD…IEFTTGTITA (83 aa).

The protein belongs to the CDS family.

The protein localises to the membrane. The catalysed reaction is a 1,2-diacyl-sn-glycero-3-phosphate + CTP + H(+) = a CDP-1,2-diacyl-sn-glycerol + diphosphate. It functions in the pathway phospholipid metabolism; CDP-diacylglycerol biosynthesis; CDP-diacylglycerol from sn-glycerol 3-phosphate: step 3/3. In Dictyostelium discoideum (Social amoeba), this protein is Probable phosphatidate cytidylyltransferase (cdsA).